Consider the following 342-residue polypeptide: Ketol-acid reductoisomerase (NADP(+)) (342 aa).

The KARI N-terminal Rossmann domain maps to 2–182 (AEIYYDNDAD…GGLRAGGIKT (181 aa)). Residues 25-28 (YGSQ), lysine 48, serine 51, serine 53, and 83-86 (DQVQ) each bind NADP(+). The active site involves histidine 108. Glycine 134 is an NADP(+) binding site. One can recognise a KARI C-terminal knotted domain in the interval 183–328 (TFTEETETDL…RELRKLFAWN (146 aa)). 4 residues coordinate Mg(2+): aspartate 191, glutamate 195, glutamate 227, and glutamate 231. Serine 252 contributes to the substrate binding site.

It belongs to the ketol-acid reductoisomerase family. Mg(2+) serves as cofactor.

It carries out the reaction (2R)-2,3-dihydroxy-3-methylbutanoate + NADP(+) = (2S)-2-acetolactate + NADPH + H(+). The catalysed reaction is (2R,3R)-2,3-dihydroxy-3-methylpentanoate + NADP(+) = (S)-2-ethyl-2-hydroxy-3-oxobutanoate + NADPH + H(+). It functions in the pathway amino-acid biosynthesis; L-isoleucine biosynthesis; L-isoleucine from 2-oxobutanoate: step 2/4. It participates in amino-acid biosynthesis; L-valine biosynthesis; L-valine from pyruvate: step 2/4. Functionally, involved in the biosynthesis of branched-chain amino acids (BCAA). Catalyzes an alkyl-migration followed by a ketol-acid reduction of (S)-2-acetolactate (S2AL) to yield (R)-2,3-dihydroxy-isovalerate. In the isomerase reaction, S2AL is rearranged via a Mg-dependent methyl migration to produce 3-hydroxy-3-methyl-2-ketobutyrate (HMKB). In the reductase reaction, this 2-ketoacid undergoes a metal-dependent reduction by NADPH to yield (R)-2,3-dihydroxy-isovalerate. This is Ketol-acid reductoisomerase (NADP(+)) from Leifsonia xyli subsp. xyli (strain CTCB07).